Reading from the N-terminus, the 278-residue chain is 2-dehydro-3-deoxyphosphooctonate aldolase (278 aa).

It belongs to the KdsA family.

It localises to the cytoplasm. It catalyses the reaction D-arabinose 5-phosphate + phosphoenolpyruvate + H2O = 3-deoxy-alpha-D-manno-2-octulosonate-8-phosphate + phosphate. It participates in carbohydrate biosynthesis; 3-deoxy-D-manno-octulosonate biosynthesis; 3-deoxy-D-manno-octulosonate from D-ribulose 5-phosphate: step 2/3. It functions in the pathway bacterial outer membrane biogenesis; lipopolysaccharide biosynthesis. In Fusobacterium nucleatum subsp. nucleatum (strain ATCC 25586 / DSM 15643 / BCRC 10681 / CIP 101130 / JCM 8532 / KCTC 2640 / LMG 13131 / VPI 4355), this protein is 2-dehydro-3-deoxyphosphooctonate aldolase.